The following is a 358-amino-acid chain: MQKIIHVDMDCFYAAVEMRDFPELRGKPIAVGGRSDRRGVISTCNYEARQFGVRSAMASGYALKLCPDLILVPGRMQVYKEVSSQIRAVFERYTYLIEPLSLDEAYLDVTDSPHCKGSATLIAEAIRADILAETGLTASAGIAPVKFLAKIASDLNKPNGQYVIRPDMINEFVKTLPLIKIPGVGKVTAKKLADLGLHTCSDVQAYPPAQLIERFGKFGTVLIERSKGVDKRGISPNRERKSVGVETTLAKDIHTLEQCRAVMPQLIQELGARVSRSAKDRTIHKQVVKIKFEDFKQTTIEHRSDDISVNLFYQLLEQAMERQHERGIRLLGVSVGLASNSSTTDDSDVDSSQLDLGF.

Residues 4 to 185 (IIHVDMDCFY…LPLIKIPGVG (182 aa)) enclose the UmuC domain. Residues D8 and D103 each contribute to the Mg(2+) site. E104 is a catalytic residue.

Belongs to the DNA polymerase type-Y family. In terms of assembly, monomer. The cofactor is Mg(2+).

It localises to the cytoplasm. The catalysed reaction is DNA(n) + a 2'-deoxyribonucleoside 5'-triphosphate = DNA(n+1) + diphosphate. Its function is as follows. Poorly processive, error-prone DNA polymerase involved in untargeted mutagenesis. Copies undamaged DNA at stalled replication forks, which arise in vivo from mismatched or misaligned primer ends. These misaligned primers can be extended by PolIV. Exhibits no 3'-5' exonuclease (proofreading) activity. May be involved in translesional synthesis, in conjunction with the beta clamp from PolIII. The chain is DNA polymerase IV from Shewanella pealeana (strain ATCC 700345 / ANG-SQ1).